A 415-amino-acid polypeptide reads, in one-letter code: MESLEQIGIKAKKASRYLAKLGIDEKNKALEAVADALTANAESIIAANEKDLVNAKANGMKPALIDRLTLDIKRINAMADGIRVLTGLEDPVGEVTGMKKRPNGLVIGTKRVPLGVVAIIYESRPNVTADAFGLTFKSGNACILRGGSDSINSNIAIADVIANALSDNGINPDVINLIKDTDRALVNQLMKMNDYIDVIIPRGGAGLIKNVVNNSTVPVIETGTGNCHVYVDEYADIDMAVKVIYNAKTSRIGVCNACESLVIHKAVAKQAIPLIVNALKEKNVEVRGDEYAMQCDSRIVPASDDDWGMEYLDYIISVKTVDSVDEAIEHINTYNTGHSESIITKDYNNANRFLDEIDAACVYVNASTRFSDGFEFGFGAEIGISTQKLHARGPMGLKALTTTKYVIYGEGQIRQ.

This sequence belongs to the gamma-glutamyl phosphate reductase family.

Its subcellular location is the cytoplasm. The catalysed reaction is L-glutamate 5-semialdehyde + phosphate + NADP(+) = L-glutamyl 5-phosphate + NADPH + H(+). It participates in amino-acid biosynthesis; L-proline biosynthesis; L-glutamate 5-semialdehyde from L-glutamate: step 2/2. Its function is as follows. Catalyzes the NADPH-dependent reduction of L-glutamate 5-phosphate into L-glutamate 5-semialdehyde and phosphate. The product spontaneously undergoes cyclization to form 1-pyrroline-5-carboxylate. In Lachnospira eligens (strain ATCC 27750 / DSM 3376 / VPI C15-48 / C15-B4) (Eubacterium eligens), this protein is Gamma-glutamyl phosphate reductase.